We begin with the raw amino-acid sequence, 311 residues long: Olfactory receptor 14I1 (311 aa).

The Extracellular portion of the chain corresponds to 1 to 26; the sequence is MDNLTKVTEFLLMEFSGIWELQVLHA. An N-linked (GlcNAc...) asparagine glycan is attached at asparagine 3. The chain crosses the membrane as a helical span at residues 27-47; it reads GLFLLIYLAVLVGNLLIIAVI. Topologically, residues 48 to 55 are cytoplasmic; that stretch reads TLDQHLHT. Residues 56-76 form a helical membrane-spanning segment; the sequence is PMYFFLKNLSVLDLCYISVTV. The Extracellular portion of the chain corresponds to 77–92; sequence PKSIRNSLTRRSSISY. A helical membrane pass occupies residues 93-113; the sequence is LGCVAQVYFFSAFASAELAFL. Residues cysteine 95 and cysteine 188 are joined by a disulfide bond. Over 114-141 the chain is Cytoplasmic; that stretch reads TVMSYDRYVAICHPLQYRAVMTSGGCYQ. The chain crosses the membrane as a helical span at residues 142-162; it reads MAVTTWLSCFSYAAVHTGNMF. Residues 163–189 lie on the Extracellular side of the membrane; the sequence is REHVCRSSVIHQFFRDIPHVLALVSCE. Residues 190-210 form a helical membrane-spanning segment; sequence VFFVEFLTLALSSCLVLGCFI. At 211-241 the chain is on the cytoplasmic side; sequence LMMISYFQIFSTVLRIPSGQSRAKAFSTCSP. Residues 242-262 traverse the membrane as a helical segment; sequence QLIVIMLFLTTGLFAALGPIA. The Extracellular segment spans residues 263 to 269; it reads KALSIQD. A helical membrane pass occupies residues 270 to 290; it reads LVIALTYTVLPPFLNPIIYSL. Residues 291 to 311 lie on the Cytoplasmic side of the membrane; sequence RNKEIKTAMWRLFVKIYFLQK.

Belongs to the G-protein coupled receptor 1 family.

It is found in the cell membrane. Functionally, odorant receptor. The polypeptide is Olfactory receptor 14I1 (OR14I1) (Homo sapiens (Human)).